Here is a 172-residue protein sequence, read N- to C-terminus: Trypsin inhibitor DE-3 (172 aa).

Cystine bridges form between C39/C83 and C132/C139.

Belongs to the protease inhibitor I3 (leguminous Kunitz-type inhibitor) family.

Its function is as follows. Inhibition of trypsin. In Erythrina variegata (Indian coral tree), this protein is Trypsin inhibitor DE-3.